The primary structure comprises 359 residues: Putative plant UBX domain-containing protein 15 (359 aa).

The 81-residue stretch at 277-357 (DRSVVCSISV…GIANSIISVT (81 aa)) folds into the UBX domain.

This chain is Putative plant UBX domain-containing protein 15, found in Arabidopsis thaliana (Mouse-ear cress).